A 55-amino-acid polypeptide reads, in one-letter code: Large ribosomal subunit protein bL33 (55 aa).

Belongs to the bacterial ribosomal protein bL33 family.

This chain is Large ribosomal subunit protein bL33, found in Yersinia pestis (strain Pestoides F).